Here is a 357-residue protein sequence, read N- to C-terminus: Ubiquitin carboxyl-terminal hydrolase 2 (357 aa).

In terms of domain architecture, USP spans 19–351; that stretch reads TGLRNLGNTC…DAYLLFYELA (333 aa). Cys28 serves as the catalytic Nucleophile. The Zn(2+) site is built by Cys177, Cys180, Cys228, and Cys231. The active-site Proton acceptor is His309.

The protein belongs to the peptidase C19 family. USP2 subfamily. As to quaternary structure, homooligomer.

It localises to the cytoplasm. The protein resides in the perinuclear region. It carries out the reaction Thiol-dependent hydrolysis of ester, thioester, amide, peptide and isopeptide bonds formed by the C-terminal Gly of ubiquitin (a 76-residue protein attached to proteins as an intracellular targeting signal).. Functionally, hydrolase that deubiquitinates polyubiquitinated target proteins such as MDM2, MDM4 and CCND1. Possesses both ubiquitin-specific peptidase and isopeptidase activities. May play a role in the regulation of the circadian clock. The chain is Ubiquitin carboxyl-terminal hydrolase 2 (USP2) from Gallus gallus (Chicken).